A 252-amino-acid polypeptide reads, in one-letter code: Thiamine thiazole synthase (252 aa).

NAD(+) contacts are provided by residues Ser-35, Glu-54 to Lys-55, Gly-62, Val-126, and His-152 to Asp-154. Fe cation-binding residues include Asp-154 and His-169. Residue Met-217 coordinates NAD(+). Position 227 (Arg-227) interacts with glycine.

This sequence belongs to the THI4 family. As to quaternary structure, homooctamer; tetramer of dimers. Requires Fe(2+) as cofactor.

The enzyme catalyses hydrogen sulfide + glycine + NAD(+) = ADP-5-ethyl-4-methylthiazole-2-carboxylate + nicotinamide + 3 H2O + H(+). It participates in cofactor biosynthesis; thiamine diphosphate biosynthesis. In terms of biological role, involved in the biosynthesis of the thiazole moiety of thiamine. Catalyzes the conversion of NAD and glycine to adenosine diphosphate 5-(2-hydroxyethyl)-4-methylthiazole-2-carboxylate (ADT), an adenylated thiazole intermediate, using free sulfide as a source of sulfur. In Pyrococcus furiosus (strain ATCC 43587 / DSM 3638 / JCM 8422 / Vc1), this protein is Thiamine thiazole synthase.